A 143-amino-acid chain; its full sequence is Hemoglobin subunit alpha (143 aa).

The Globin domain occupies 2–143 (TLSDKDKSTV…VALALAERYR (142 aa)). H60 contributes to the O2 binding site. Residue H89 participates in heme b binding.

Belongs to the globin family. In terms of assembly, heterotetramer of two alpha chains and two beta chains. In terms of tissue distribution, red blood cells.

Its function is as follows. Involved in oxygen transport from gills to the various peripheral tissues. In Thunnus thynnus (Atlantic bluefin tuna), this protein is Hemoglobin subunit alpha (hba).